The sequence spans 314 residues: Aspartate carbamoyltransferase catalytic subunit (314 aa).

Residues R55 and T56 each contribute to the carbamoyl phosphate site. K83 contributes to the L-aspartate binding site. 3 residues coordinate carbamoyl phosphate: R105, H134, and Q137. L-aspartate-binding residues include R167 and R221. Carbamoyl phosphate is bound by residues G262 and P263.

This sequence belongs to the aspartate/ornithine carbamoyltransferase superfamily. ATCase family. Heterododecamer (2C3:3R2) of six catalytic PyrB chains organized as two trimers (C3), and six regulatory PyrI chains organized as three dimers (R2).

It catalyses the reaction carbamoyl phosphate + L-aspartate = N-carbamoyl-L-aspartate + phosphate + H(+). Its pathway is pyrimidine metabolism; UMP biosynthesis via de novo pathway; (S)-dihydroorotate from bicarbonate: step 2/3. In terms of biological role, catalyzes the condensation of carbamoyl phosphate and aspartate to form carbamoyl aspartate and inorganic phosphate, the committed step in the de novo pyrimidine nucleotide biosynthesis pathway. The chain is Aspartate carbamoyltransferase catalytic subunit from Corynebacterium urealyticum (strain ATCC 43042 / DSM 7109).